Consider the following 95-residue polypeptide: Aspartyl/glutamyl-tRNA(Asn/Gln) amidotransferase subunit C (95 aa).

It belongs to the GatC family. As to quaternary structure, heterotrimer of A, B and C subunits.

The catalysed reaction is L-glutamyl-tRNA(Gln) + L-glutamine + ATP + H2O = L-glutaminyl-tRNA(Gln) + L-glutamate + ADP + phosphate + H(+). It carries out the reaction L-aspartyl-tRNA(Asn) + L-glutamine + ATP + H2O = L-asparaginyl-tRNA(Asn) + L-glutamate + ADP + phosphate + 2 H(+). Its function is as follows. Allows the formation of correctly charged Asn-tRNA(Asn) or Gln-tRNA(Gln) through the transamidation of misacylated Asp-tRNA(Asn) or Glu-tRNA(Gln) in organisms which lack either or both of asparaginyl-tRNA or glutaminyl-tRNA synthetases. The reaction takes place in the presence of glutamine and ATP through an activated phospho-Asp-tRNA(Asn) or phospho-Glu-tRNA(Gln). In Nitrosospira multiformis (strain ATCC 25196 / NCIMB 11849 / C 71), this protein is Aspartyl/glutamyl-tRNA(Asn/Gln) amidotransferase subunit C.